The following is a 301-amino-acid chain: Homoserine O-acetyltransferase (301 aa).

Cys-142 serves as the catalytic Acyl-thioester intermediate. Lys-163 and Ser-192 together coordinate substrate. His-235 serves as the catalytic Proton acceptor. Glu-237 is a catalytic residue. A substrate-binding site is contributed by Arg-249.

The protein belongs to the MetA family. In terms of assembly, homodimer.

It is found in the cytoplasm. It catalyses the reaction L-homoserine + acetyl-CoA = O-acetyl-L-homoserine + CoA. Its pathway is amino-acid biosynthesis; L-methionine biosynthesis via de novo pathway; O-acetyl-L-homoserine from L-homoserine: step 1/1. In terms of biological role, transfers an acetyl group from acetyl-CoA to L-homoserine, forming acetyl-L-homoserine. Utilizes a ping-pong kinetic mechanism in which the acetyl group of acetyl-CoA is initially transferred to the enzyme to form an acetyl-enzyme intermediate before subsequent transfer to homoserine to form the final product, O-acetylhomoserine. Cannot use succinyl-CoA as the acyl donor. The polypeptide is Homoserine O-acetyltransferase (Bacillus cereus (strain ATCC 10987 / NRS 248)).